Consider the following 479-residue polypeptide: UPF0164 protein TP_0865 (479 aa).

The first 49 residues, 1–49 (MVRMRRRRACSSGGACGCAAVRGARSFLSVRVLGMRIGMSALCLAPLFA), serve as a signal peptide directing secretion.

Belongs to the UPF0164 family.

This chain is UPF0164 protein TP_0865, found in Treponema pallidum (strain Nichols).